The following is a 244-amino-acid chain: Protein DCG1 (244 aa).

It belongs to the HyuE racemase family.

The protein is Protein DCG1 (DCG1) of Saccharomyces cerevisiae (strain ATCC 204508 / S288c) (Baker's yeast).